A 148-amino-acid polypeptide reads, in one-letter code: Deoxyuridine 5'-triphosphate nucleotidohydrolase (148 aa).

Substrate is bound by residues 68 to 70 (RSG), Asn-81, 85 to 87 (TID), and Lys-95.

This sequence belongs to the dUTPase family. The cofactor is Mg(2+).

It carries out the reaction dUTP + H2O = dUMP + diphosphate + H(+). It participates in pyrimidine metabolism; dUMP biosynthesis; dUMP from dCTP (dUTP route): step 2/2. Its function is as follows. This enzyme is involved in nucleotide metabolism: it produces dUMP, the immediate precursor of thymidine nucleotides and it decreases the intracellular concentration of dUTP so that uracil cannot be incorporated into DNA. The protein is Deoxyuridine 5'-triphosphate nucleotidohydrolase of Rickettsia rickettsii (strain Iowa).